We begin with the raw amino-acid sequence, 282 residues long: MAGAGLIGIRRRIKSVTNIRKITKAMGLVSTAKLRKARVNLEINKKYYNEYKVILKDIINFIEDSNIYIDGNGSHKKLYVIFTSDSGLCGSFNINIINNVINEIKEDKENSLVIVIGQKGRMYLKKLGINTLAEYIEIPDVPTTKEARTIAKNIIKLYSSKEVGEVFLVYSEFYSPVKQQVLINKILPFTKENKSDNKYIEFNPPVTQFMDEILENYLKATILNCFSNSKASENGSRMTAMNGATDNANDLLDNLDLQFNRLRQSAITQEISEIVGGAEAQR.

It belongs to the ATPase gamma chain family. F-type ATPases have 2 components, CF(1) - the catalytic core - and CF(0) - the membrane proton channel. CF(1) has five subunits: alpha(3), beta(3), gamma(1), delta(1), epsilon(1). CF(0) has three main subunits: a, b and c.

The protein resides in the cell membrane. Its function is as follows. Produces ATP from ADP in the presence of a proton gradient across the membrane. The gamma chain is believed to be important in regulating ATPase activity and the flow of protons through the CF(0) complex. This is ATP synthase gamma chain from Clostridium botulinum (strain Langeland / NCTC 10281 / Type F).